Consider the following 162-residue polypeptide: Protein hcp1 (162 aa).

The protein belongs to the hcp1 family. In terms of assembly, hexamer. Three hcp1 monomers form two closely related hexameric rings with a 40 Angstrom internal diameter.

The protein localises to the secreted. In terms of biological role, required for assembly of the protein secretion apparatus HSI-I. Actively secreted during chronic infection of cystic fibrosis patients. This Pseudomonas aeruginosa (strain ATCC 15692 / DSM 22644 / CIP 104116 / JCM 14847 / LMG 12228 / 1C / PRS 101 / PAO1) protein is Protein hcp1 (hcp1).